A 211-amino-acid chain; its full sequence is MFITFEGIDGCGKTTQAVLLAKYLSDLYGEHRVVLTREPGGTSLNELIRGALLGLTDYKLDGITELMLFIAMRRESFVKVVLPGLLAGKIVISDRFTDSTVAYQGYGCGVDLALVGMLNSLVADVVPDITFVIDASIELALARTSLNGFENHGPEFYDRVREGFRTIVANNPHRCHMIDCKSDAAEDVYSTHDRIVALFRAITQDKLKVAK.

7 to 14 contributes to the ATP binding site; that stretch reads GIDGCGKT.

It belongs to the thymidylate kinase family.

The catalysed reaction is dTMP + ATP = dTDP + ADP. Functionally, phosphorylation of dTMP to form dTDP in both de novo and salvage pathways of dTTP synthesis. This chain is Thymidylate kinase, found in Anaplasma marginale (strain St. Maries).